The sequence spans 335 residues: Serpentine receptor class alpha-13 (335 aa).

Topologically, residues methionine 1 to tyrosine 25 are extracellular. Residues isoleucine 26–alanine 46 form a helical membrane-spanning segment. At isoleucine 47 to arginine 61 the chain is on the cytoplasmic side. A helical transmembrane segment spans residues valine 62–lysine 82. The Extracellular segment spans residues alanine 83–phenylalanine 108. The helical transmembrane segment at isoleucine 109–isoleucine 129 threads the bilayer. At aspartate 130–serine 146 the chain is on the cytoplasmic side. Residues isoleucine 147 to leucine 167 form a helical membrane-spanning segment. The Extracellular segment spans residues threonine 168 to histidine 192. A helical membrane pass occupies residues isoleucine 193–methionine 213. Over tyrosine 214–alanine 243 the chain is Cytoplasmic. The chain crosses the membrane as a helical span at residues isoleucine 244–leucine 264. At leucine 265 to asparagine 278 the chain is on the extracellular side. The helical transmembrane segment at leucine 279–cysteine 299 threads the bilayer. At lysine 300–lysine 335 the chain is on the cytoplasmic side.

This sequence belongs to the nematode receptor-like protein sra family. As to expression, expressed in the AWA and AWC chemosensory neurons.

It is found in the membrane. Its function is as follows. Chemosensory receptor that negatively regulates RAS/MAPK signaling during vulva induction and the negative regulation of olfaction of volitile attractants. Required for the suppression of vulval induction in response to food starvation. Signaling acts through the GPA-5 G-alpha protein subunit. In Caenorhabditis elegans, this protein is Serpentine receptor class alpha-13 (sra-13).